The sequence spans 677 residues: MTIRHQGQQYRPRMAFLQKIEALVKDMQNPETGVRMQNQRVLVTSVPHAMTGGDVLQWIIQRLWISNLEAQNLGNFIVKYGYIYPLQDPKNLVLKPDSSLYRFQTPYFWPTQQWPAEDTDYAIYLAKRNIKKKGILEEYEKENYDFLNKKINYKWDFVIMQAKEQYRTGKERNKADRYALDCQEKAYWLVHRSPPGMNNVLDYGLDRVTNPNEVKKQTVTAVRKEIMYYQQALMRSTVKSSVSLGGIVKYSEQFSSNDAIMSGCLPSNPWITDDTQFWDLNAKLVEVPTKMRVERWAFNFSELIRDPKGRQSFQYFLKKEFSGENLGFWEACEDLKYGDQSKVKEKAEEIYKLFLAPGARRWINIDGKTMDITVKGLRHPHRYVLDAAQTHIYMLMKKDSYARYLKSPIYKEMLAKAIEPQETTKRSSTLPFMRRHLRSSPSPVILRQLEEEERAREAANTVDITQPGQHLAPSPHLAVYTGTCVPPSPSSPFSPSCRSPRKPFPSPSRFIRRPSIAICPSPIRVALEGSSGLEGKGEASWSGANPGPPVTESIETSVDRSRPHSQPRAPLKARAALSLGRFLRRGCLASPVFARLSPKCPSVSHGKVQPLGDMGQQLPRLKPKKVANFFQIKMEMPTDSGPCLMDSDDPGAGESGDQTTEKEVICPWESLAEGKAG.

The 76-residue stretch at 30-105 (PETGVRMQNQ…PDSSLYRFQT (76 aa)) folds into the DEP domain. Residues 219–280 (VTAVRKEIMY…ITDDTQFWDL (62 aa)) enclose the G protein gamma domain. The RGS domain maps to 295–416 (RWAFNFSELI…SPIYKEMLAK (122 aa)). Disordered regions lie at residues 530 to 571 (SSGL…RAPL) and 639 to 677 (DSGP…GKAG).

In terms of assembly, heterodimer with GNB5. Interacts with RGS7BP, leading to regulate the subcellular location of the heterodimer formed with GNB5. Component of the RGS9-1-Gbeta5 complex composed of RGS9 (RGS9-1), Gbeta5 (GNB5) and RGS9BP. Interacts with PDE6G and GNAT1. In terms of tissue distribution, expressed in the central nervous system. Isoform RGS9L is found in striatum, hypothalamus and nucleus accumbens while isoform RGS9S is expressed in retina and pineal gland.

The protein localises to the membrane. In terms of biological role, inhibits signal transduction by increasing the GTPase activity of G protein alpha subunits thereby driving them into their inactive GDP-bound form. Binds to GNAT1. Involved in phototransduction; key element in the recovery phase of visual transduction. This Rattus norvegicus (Rat) protein is Regulator of G-protein signaling 9 (Rgs9).